The chain runs to 486 residues: ATP synthase subunit beta (486 aa).

Residue 164–171 (GGAGVGKT) participates in ATP binding.

The protein belongs to the ATPase alpha/beta chains family. F-type ATPases have 2 components, CF(1) - the catalytic core - and CF(0) - the membrane proton channel. CF(1) has five subunits: alpha(3), beta(3), gamma(1), delta(1), epsilon(1). CF(0) has four main subunits: a(1), b(1), b'(1) and c(9-12).

The protein localises to the cellular thylakoid membrane. The catalysed reaction is ATP + H2O + 4 H(+)(in) = ADP + phosphate + 5 H(+)(out). Functionally, produces ATP from ADP in the presence of a proton gradient across the membrane. The catalytic sites are hosted primarily by the beta subunits. This Prochlorococcus marinus subsp. pastoris (strain CCMP1986 / NIES-2087 / MED4) protein is ATP synthase subunit beta.